The chain runs to 331 residues: Adenine deaminase (331 aa).

Residues His17, His19, and His197 each contribute to the Zn(2+) site. Glu200 functions as the Proton donor in the catalytic mechanism. Asp278 contributes to the Zn(2+) binding site. A substrate-binding site is contributed by Asp279.

This sequence belongs to the metallo-dependent hydrolases superfamily. Adenosine and AMP deaminases family. Adenine deaminase type 2 subfamily. Requires Zn(2+) as cofactor.

It carries out the reaction adenine + H2O + H(+) = hypoxanthine + NH4(+). Catalyzes the hydrolytic deamination of adenine to hypoxanthine. Plays an important role in the purine salvage pathway and in nitrogen catabolism. This chain is Adenine deaminase, found in Wolinella succinogenes (strain ATCC 29543 / DSM 1740 / CCUG 13145 / JCM 31913 / LMG 7466 / NCTC 11488 / FDC 602W) (Vibrio succinogenes).